A 133-amino-acid chain; its full sequence is Arginine decarboxylase proenzyme (133 aa).

Ser-81 acts as the Schiff-base intermediate with substrate; via pyruvic acid in catalysis. At Ser-81 the chain carries Pyruvic acid (Ser); by autocatalysis. Catalysis depends on His-86, which acts as the Proton acceptor; for processing activity. Cys-101 (proton donor; for catalytic activity) is an active-site residue.

The protein belongs to the prokaryotic AdoMetDC family. Type 1 subfamily. Heterooctamer of four alpha and four beta chains arranged as a tetramer of alpha/beta heterodimers. Pyruvate serves as cofactor. In terms of processing, is synthesized initially as an inactive proenzyme. Formation of the active enzyme involves a self-maturation process in which the active site pyruvoyl group is generated from an internal serine residue via an autocatalytic post-translational modification. Two non-identical subunits are generated from the proenzyme in this reaction, and the pyruvate is formed at the N-terminus of the alpha chain, which is derived from the carboxyl end of the proenzyme. The post-translation cleavage follows an unusual pathway, termed non-hydrolytic serinolysis, in which the side chain hydroxyl group of the serine supplies its oxygen atom to form the C-terminus of the beta chain, while the remainder of the serine residue undergoes an oxidative deamination to produce ammonia and the pyruvoyl group blocking the N-terminus of the alpha chain.

It catalyses the reaction L-arginine + H(+) = agmatine + CO2. The protein operates within amine and polyamine biosynthesis; agmatine biosynthesis; agmatine from L-arginine: step 1/1. Specifically catalyzes the decarboxylation of L-arginine to agmatine. Has no S-adenosylmethionine decarboxylase (AdoMetDC) activity. This is Arginine decarboxylase proenzyme from Pyrobaculum arsenaticum (strain DSM 13514 / JCM 11321 / PZ6).